The chain runs to 305 residues: UDP-3-O-acyl-N-acetylglucosamine deacetylase (305 aa).

The Zn(2+) site is built by histidine 79, histidine 238, and aspartate 242. Histidine 265 (proton donor) is an active-site residue.

It belongs to the LpxC family. It depends on Zn(2+) as a cofactor.

The catalysed reaction is a UDP-3-O-[(3R)-3-hydroxyacyl]-N-acetyl-alpha-D-glucosamine + H2O = a UDP-3-O-[(3R)-3-hydroxyacyl]-alpha-D-glucosamine + acetate. It functions in the pathway glycolipid biosynthesis; lipid IV(A) biosynthesis; lipid IV(A) from (3R)-3-hydroxytetradecanoyl-[acyl-carrier-protein] and UDP-N-acetyl-alpha-D-glucosamine: step 2/6. Catalyzes the hydrolysis of UDP-3-O-myristoyl-N-acetylglucosamine to form UDP-3-O-myristoylglucosamine and acetate, the committed step in lipid A biosynthesis. This chain is UDP-3-O-acyl-N-acetylglucosamine deacetylase, found in Klebsiella pneumoniae subsp. pneumoniae (strain ATCC 700721 / MGH 78578).